The chain runs to 157 residues: Acetyltransferase PseH (157 aa).

An N-acetyltransferase domain is found at 5–152 (KNFAELNSQE…YYVCLKQSHC (148 aa)).

Its function is as follows. Catalyzes the third step in the biosynthesis of pseudaminic acid, a sialic-acid-like sugar that is used to modify flagellin. Mediates N-4 acetylation of UDP-4-amino-4,6-dideoxy-beta-L-AltNAc to form UDP-2,4-diacetamido-2,4,6-trideoxy-beta-L-altropyranose. The protein is Acetyltransferase PseH (pseH) of Campylobacter jejuni subsp. jejuni serotype O:2 (strain ATCC 700819 / NCTC 11168).